Consider the following 194-residue polypeptide: Flagellar transcriptional regulator FlhC (194 aa).

Cysteine 139, cysteine 142, cysteine 159, and cysteine 162 together coordinate Zn(2+).

The protein belongs to the FlhC family. In terms of assembly, heterohexamer composed of two FlhC and four FlhD subunits. Each FlhC binds a FlhD dimer, forming a heterotrimer, and a hexamer assembles by dimerization of two heterotrimers. Requires Zn(2+) as cofactor.

It is found in the cytoplasm. Functionally, functions in complex with FlhD as a master transcriptional regulator that regulates transcription of several flagellar and non-flagellar operons by binding to their promoter region. Activates expression of class 2 flagellar genes, including fliA, which is a flagellum-specific sigma factor that turns on the class 3 genes. Also regulates genes whose products function in a variety of physiological pathways. This Serratia marcescens protein is Flagellar transcriptional regulator FlhC.